A 3014-amino-acid polypeptide reads, in one-letter code: MSTNPKPQRKTKRNTNRRPQDVKFPGGGQIVGGVYLLPRRGPKLGVRATRKNSERSQPRGRRQPIPKARRPTGRSWGQPGYPWPLYANEGLGWAGWLLSPRSSRPNWGPNDPRRKSPNLGRVIHTLTCGFPHLMGYIPLVGGPVGGVSRALAHGVKVLEDGINYATGNLPGCPFSIFVLALLWCLTVPASAVPYRNASGVYHVTNDCPNSSIVYEADNLILHAPGCVPCVLEDNVSRCWVQITPTLSAPSFGAVTALLRRAVDYLAGGAAFCSALYVGDACGALSLVGQMFTYKPRQHTTVQDCNCSIYSGHITGHRMAWDMMMKWSPTTALLMAQLLRIPQVVIDIIAGGHWGVLLAAAYFASTANWAKVILVLFLFAGVDGRTHTVGGTVGQGLKSLTSFFNPGPQRQLQFVNTNGSWHINSTALNCNDSLQTGFIAGLMYAHKFNSSGCPERMSSCRPLAAFDQGWGTISYATISGPSDDKPYCWHYPPRPCGVVPARDVCGPVYCFTPSPVVVGTTDRRGCPTYNWGSNETDILLLNNIRPPAGNWFGCTWMNSTGFVKNCGAPPCNLGPTGNNSLKCPTDCFRKHPDATYTRCGSGPWLTPRCLVHYPYRLWHYPCTVNYTIFKVRMFIGGLEHRLEAACNWTYGERCDLEDRDRAELSPLLHTTTQWAILPCSFTPTPALSTGLIHLHQNIVDTQYLYGLSSSIVSWAVKWEYIMLVFLLLADARICTCLLILLLICQAEATCKNVIVLNAAAAAGNHGFFWGLLVVCLAWHVKGRLVPGATYLCLGVWPLLLVRLLRPHRALALDSSDGGTVGCLVLIVLTIFTLTPGYKKKVVLVMWWLQYFIARVEAIIHVWVPPLQVKGGRDAVIMLTCLFHPALGFEITKILFGILGPLYLLQHSLTKVPYFLRARALLRLCLLAKHLVYGKYVQAALLHLGRLTGTYIYDHLAPMKDWAASGLRELTVATEPIVFSAMETKVITWGADTAACGNILAVLPVSARRGREIFLGPADDIKTSGWRLLAPITAYAQQTRGVLGAIVLSLTGRDKNEAEGEVQFLSTATQTFLGICINGVMWTLFHGAGSKTLAGPKGPVVQMYTNVDKDLVGWPSPPGKGSLTRCTCGSADLYLVTRHADVIPARRRGDTRASLLSPRPISYLKGSSGGPIMCPSGHVVGVFRAAVCTRGVAKALEFVPVENLETTMRSPVFTDNSTPPAVPHEFQVGHLHAPTGSGKSTKVPAAYAAQGYKVLVLNPSVAATFGFGAYMSRAYGVDPNIRTGVRTVTTGAGITYSTYGKFFADGGCSGGAYDVIICDECHSQDATTILGIGTVLDQAETAGARLVVLATAIPPGSVTTPHPNIEEVALPSEGEIPFYGRAIPLVLIKGGRHLIFCHSKKKCDELAKQLTSLGVNAVAYYRGLDVAVIPATGDVVVCSTDALMTGFTGDFDSVIDCNSAVTQTVDFSLDPTFTIETTTVPQDAVSRSQRRGRTGRGRHGIYRYVSSGERPSGIFDSVVLCECYDAGCAWYDLTPAETTVRLRAYLNTPGLPVCQEHLEFWEGVFTGLTNIDAHMLSQAKQGGENFPYLVAYQATVCVRAKAPPPSWDTMWKCMICLKPTLTGPTPLLYRLGAVQNEITLTHPITKYIMACMSADLEVITSTWVLVGGVVAALAAYCLTVGSVAIVGRIILSGRPAITPDREVLYQQFDEMEECSASLPYVDEARAIAGQFKEKVLGLIGTAGQKAETLKPAATSMWSKAEQFWAKHMWNFVSGIQYLAGLSTLPGNPAVATLMSFTAAVTSPLTTHQTLLFNILGGWVASQIAPPTAATAFVVSGMAGAAVGNIGLGRVLIDILAGYGTGVAGALVAFKIMCGERPTAEELVNLLPSILCPGALVVGVICAAVLRRHIGPGEGAVQWMNRLIAFASRGNHGSPTHYVPETDASAKVTQLLSSLTVTSLLKRLHTWIGEDYSTPCDGTWLRAIWDWVCTALTDFKAWLQAKLLPQLPGVPFFSCQKGYKGVWRGDGVNSTKCPCGATISGHVKNGTMRIVGPKLCSNTWQGTFPINATTTGPSVPAPAPNYKFALWRVGAADYAEVRRVGDYHYITGVTQDNLKCPCQVPSPEFFTELDGVRIHRFAPPCNPLLREEVTFSVGLHSYVVGSQLPCEPEPDVTVLTSMLSDPAHITAETAKRRLNRGSPPSLANSSASQLSAPSLKATCTIQGHHPDADLIKANLLWRQCMGGNITRVEAENKVEILDCFKPLKEEEDDREISVSADCFKKGPAFPPALPVWARPGYDPPLLETWKRPDYDPPQVWGCPIPPAGPPPVPLPRRKRKPMELSDSTVSQVMADLADARFKVDTPSIEGQDSALGTSSQHDSGPEEKRDDNSDAASYSSMPPLEGEPGDPDLSSGSWSTVSGEDNVVCCSMSYTWTGALITPCSAEEEKLPINPLSNTLLRHHNLVYSTSSRSAGLRQKKVTFDRLQVLDDHYREVVDEMKRLASKVKARLLPLEEACGLTPPHSARSKYGYGAKEVRSLDKKALKHIEGVWQDLLDDSDTPLPTTIMAKNEVFAVEPSKGGKKPARLIVYPDLGVRVCEKRALYDVAQKLPTALMGPSYGFQYSPAQRVDFLLKAWKSKKIPMAFSYDTRCFDSTITEHDIMTEESIYQSCDLQPEARVAIRSLTQRLYCGGPMYNSKGQQCGYRRCRASGVFTTSMGNTMTCYIKALASCRAAKLRDCTLLVCGDDLVAICESQGTHEDEASLRAFTEAMTRYSAPPGDPPVPAYDLELVTSCSSNVSVARDASGNRIYYLTRDPQVPLAKAAWETAKHSPVNSWLGNIIMYAPTLWARIVLMTHFFSVLQSQEQLEKTLAFEMYGSVYSVTPLDLPAIIQRLHGLSAFSLHSYSPSEINRVASCLRKLGVPPLRAWRHRARAVRAKLIAQGGRAAICGIYLFNWAVKTKRKLTPLADADRLDLSSWFTVGAGGGDIYHSMSRARPRNLLLCLLLLSVGVGIFLLPAR.

Ser-2 carries the post-translational modification N-acetylserine; by host. The interaction with STAT1 stretch occupies residues 2–23; sequence STNPKPQRKTKRNTNRRPQDVK. An interaction with EIF2AK2/PKR region spans residues 2–58; it reads STNPKPQRKTKRNTNRRPQDVKFPGGGQIVGGVYLLPRRGPKLGVRATRKNSERSQP. The segment at 2 to 59 is interaction with DDX3X; sequence STNPKPQRKTKRNTNRRPQDVKFPGGGQIVGGVYLLPRRGPKLGVRATRKNSERSQPR. Residues 2–75 are disordered; that stretch reads STNPKPQRKT…PKARRPTGRS (74 aa). The Cytoplasmic portion of the chain corresponds to 2-168; sequence STNPKPQRKT…EDGINYATGN (167 aa). 2 consecutive short sequence motifs (nuclear localization signal) follow at residues 5–13 and 38–43; these read PKPQRKTKR and PRRGPK. Basic residues predominate over residues 7 to 16; sequence PQRKTKRNTN. Ser-53 bears the Phosphoserine; by host mark. 2 consecutive short sequence motifs (nuclear localization signal) follow at residues 58-64 and 66-71; these read PRGRRQP and PKARRP. Positions 58-72 are enriched in basic residues; sequence PRGRRQPIPKARRPT. Residues Ser-99 and Ser-116 each carry the phosphoserine; by host modification. The segment at 112–152 is important for endoplasmic reticulum and mitochondrial localization; it reads PRRKSPNLGRVIHTLTCGFPHLMGYIPLVGGPVGGVSRALA. The tract at residues 122 to 173 is interaction with APOA2; the sequence is VIHTLTCGFPHLMGYIPLVGGPVGGVSRALAHGVKVLEDGINYATGNLPGCP. The segment at 164–167 is important for lipid droplets localization; it reads YATG. Residues 169–189 form a helical membrane-spanning segment; that stretch reads LPGCPFSIFVLALLWCLTVPA. Residues 178 to 191 constitute a propeptide, ER anchor for the core protein, removed in mature form by host signal peptidase; the sequence is VLALLWCLTVPASA. At 190–358 the chain is on the lumenal side; the sequence is SAVPYRNASG…AGGHWGVLLA (169 aa). N-linked (GlcNAc...) asparagine; by host glycans are attached at residues Asn-196, Asn-209, and Asn-234. The segment at 265 to 296 is important for fusion; sequence LAGGAAFCSALYVGDACGALSLVGQMFTYKPR. A glycan (N-linked (GlcNAc...) asparagine; by host) is linked at Asn-305. A helical membrane pass occupies residues 359-379; that stretch reads AAYFASTANWAKVILVLFLFA. The Lumenal portion of the chain corresponds to 380 to 726; it reads GVDGRTHTVG…WEYIMLVFLL (347 aa). Residues 385–412 are HVR1; it reads THTVGGTVGQGLKSLTSFFNPGPQRQLQ. Asn-417, Asn-423, and Asn-430 each carry an N-linked (GlcNAc...) (high mannose) asparagine; by host glycan. 4 disulfides stabilise this stretch: Cys-429-Cys-553, Cys-452-Cys-459, Cys-487-Cys-495, and Cys-504-Cys-509. Residue Asn-448 is glycosylated (N-linked (GlcNAc...) asparagine; by host). Residues 475–479 form an HVR2 region; sequence ATISG. Residues 481–494 are CD81-binding 1; it reads SDDKPYCWHYPPRP. N-linked (GlcNAc...) asparagine; by host glycosylation occurs at Asn-533. Positions 545–552 are CD81-binding 2; sequence PPAGNWFG. Asn-557 is a glycosylation site (N-linked (GlcNAc...) asparagine; by host). An intrachain disulfide couples Cys-565 to Cys-570. Asn-578 carries an N-linked (GlcNAc...) asparagine; by host glycan. Intrachain disulfides connect Cys-582–Cys-586, Cys-598–Cys-621, and Cys-608–Cys-645. N-linked (GlcNAc...) (high mannose) asparagine; by host glycosylation is found at Asn-624 and Asn-646. Cys-653 and Cys-678 are joined by a disulfide. A PKR/eIF2-alpha phosphorylation homology domain (PePHD) region spans residues 661-672; it reads AELSPLLHTTTQ. The chain crosses the membrane as a helical span at residues 727-747; the sequence is LADARICTCLLILLLICQAEA. At 748-758 the chain is on the lumenal side; it reads TCKNVIVLNAA. A helical membrane pass occupies residues 759–779; it reads AAAGNHGFFWGLLVVCLAWHV. At 780 to 783 the chain is on the cytoplasmic side; the sequence is KGRL. A helical membrane pass occupies residues 784–804; that stretch reads VPGATYLCLGVWPLLLVRLLR. Over 805–814 the chain is Lumenal; sequence PHRALALDSS. The helical transmembrane segment at 815–835 threads the bilayer; that stretch reads DGGTVGCLVLIVLTIFTLTPG. At 836–882 the chain is on the cytoplasmic side; that stretch reads YKKKVVLVMWWLQYFIARVEAIIHVWVPPLQVKGGRDAVIMLTCLFH. The chain crosses the membrane as a helical span at residues 883-903; that stretch reads PALGFEITKILFGILGPLYLL. The Lumenal segment spans residues 904–929; sequence QHSLTKVPYFLRARALLRLCLLAKHL. Residues 904-1027 enclose the Peptidase C18 domain; that stretch reads QHSLTKVPYF…DIKTSGWRLL (124 aa). Residues 905 to 1207 are protease NS2-3; that stretch reads HSLTKVPYFL…PVENLETTMR (303 aa). A lipid anchor (S-palmitoyl cysteine; by host) is attached at Cys-923. The helical transmembrane segment at 930 to 950 threads the bilayer; that stretch reads VYGKYVQAALLHLGRLTGTYI. Residues 930–950 form an interaction with host SCPS1 region; the sequence is VYGKYVQAALLHLGRLTGTYI. The Cytoplasmic segment spans residues 951 to 1658; it reads YDHLAPMKDW…CMSADLEVIT (708 aa). Active-site for protease NS2 activity; shared with dimeric partner residues include His-953, Glu-973, and Cys-994. One can recognise a Peptidase S29 domain in the interval 1028–1209; the sequence is APITAYAQQT…ENLETTMRSP (182 aa). Catalysis depends on charge relay system; for serine protease NS3 activity residues His-1084 and Asp-1108. Zn(2+) is bound by residues Cys-1124 and Cys-1126. The active-site Charge relay system; for serine protease NS3 activity is the Ser-1166. Residues Cys-1172 and His-1176 each coordinate Zn(2+). Residues 1218 to 1351 enclose the Helicase ATP-binding domain; sequence PAVPHEFQVG…ARLVVLATAI (134 aa). Residue 1231 to 1238 participates in ATP binding; the sequence is APTGSGKS. Mg(2+) is bound by residues Ser-1238 and Glu-1318. The short motif at 1317 to 1320 is the DECH box element; sequence DECH. The Helicase C-terminal domain occupies 1362–1539; sequence NIEEVALPSE…DLTPAETTVR (178 aa). The interval 1487-1499 is RNA-binding; sequence QRRGRTGRGRHGI. The chain crosses the membrane as a helical span at residues 1659 to 1679; the sequence is STWVLVGGVVAALAAYCLTVG. Residues 1680–1691 form an NS3-binding region; sequence SVAIVGRIILSG. The Cytoplasmic portion of the chain corresponds to 1680–1806; that stretch reads SVAIVGRIIL…AVTSPLTTHQ (127 aa). Residues 1807-1827 traverse the membrane as a helical segment; sequence TLLFNILGGWVASQIAPPTAA. At 1828–1829 the chain is on the lumenal side; that stretch reads TA. A helical membrane pass occupies residues 1830–1850; it reads FVVSGMAGAAVGNIGLGRVLI. Residue Asp-1851 is a topological domain, cytoplasmic. A helical membrane pass occupies residues 1852–1872; that stretch reads ILAGYGTGVAGALVAFKIMCG. Residues 1873–1882 are Lumenal-facing; it reads ERPTAEELVN. Residues 1883–1903 form a helical membrane-spanning segment; the sequence is LLPSILCPGALVVGVICAAVL. Topologically, residues 1904 to 1973 are cytoplasmic; sequence RRHIGPGEGA…WIGEDYSTPC (70 aa). The S-palmitoyl cysteine; by host moiety is linked to residue Cys-1973. Residues 1974–2003 lie within the membrane without spanning it; it reads DGTWLRAIWDWVCTALTDFKAWLQAKLLPQ. Over 2004 to 2993 the chain is Cytoplasmic; the sequence is LPGVPFFSCQ…YHSMSRARPR (990 aa). Zn(2+)-binding residues include Cys-2012, Cys-2030, Cys-2032, and Cys-2053. An FKBP8-binding region spans residues 2121 to 2209; it reads EFFTELDGVR…ANSSASQLSA (89 aa). Positions 2121-2334 are transcriptional activation; the sequence is EFFTELDGVR…VPLPRRKRKP (214 aa). The interaction with non-structural protein 4A stretch occupies residues 2136–2140; it reads PPCNP. Positions 2190 to 2441 are interaction with host SKP2; sequence RLNRGSPPSL…ALITPCSAEE (252 aa). Ser-2195, Ser-2198, Ser-2202, Ser-2205, Ser-2208, and Ser-2211 each carry phosphoserine; by host. Residues 2211-2250 form an ISDR region; sequence SLKATCTIQGHHPDADLIKANLLWRQCMGGNITRVEAENK. The interaction with EIF2AK2/PKR stretch occupies residues 2211 to 2276; it reads SLKATCTIQG…REISVSADCF (66 aa). The tract at residues 2250–2307 is NS4B-binding; the sequence is KVEILDCFKPLKEEEDDREISVSADCFKKGPAFPPALPVWARPGYDPPLLETWKRPDY. The tract at residues 2300–2378 is V3; sequence ETWKRPDYDP…GTSSQHDSGP (79 aa). Disordered stretches follow at residues 2315-2342 and 2359-2412; these read CPIPPAGPPPVPLPRRKRKPMELSDSTV and PSIE…GSWS. Residues 2316–2327 show a composition bias toward pro residues; the sequence is PIPPAGPPPVPL. The short motif at 2323 to 2326 is the SH3-binding element; sequence PPVP. The Nuclear localization signal motif lies at 2328–2337; sequence PRRKRKPMEL. Positions 2361-2375 are enriched in polar residues; sequence IEGQDSALGTSSQHD. Positions 2376–2385 are enriched in basic and acidic residues; it reads SGPEEKRDDN. Ser-2465 is modified (phosphoserine; by host). In terms of domain architecture, RdRp catalytic spans 2637–2755; it reads PMAFSYDTRC…ICESQGTHED (119 aa). 3 residues coordinate Mg(2+): Asp-2643, Asp-2741, and Asp-2742. Residues 2994-3014 form a helical membrane-spanning segment; sequence NLLLCLLLLSVGVGIFLLPAR.

It belongs to the hepacivirus polyprotein family. In terms of assembly, homooligomer. Interacts with E1 (via C-terminus). Interacts with the non-structural protein 5A. Interacts (via N-terminus) with host STAT1 (via SH2 domain); this interaction results in decreased STAT1 phosphorylation and ubiquitin-mediated proteasome-dependent STAT1 degradation, leading to decreased IFN-stimulated gene transcription. Interacts with host STAT3; this interaction constitutively activates STAT3. Interacts with host LTBR receptor. Interacts with host TNFRSF1A receptor and possibly induces apoptosis. Interacts with host HNRPK. Interacts with host YWHAE. Interacts with host UBE3A/E6AP. Interacts with host DDX3X. Interacts with host APOA2. Interacts with host RXRA protein. Interacts with host SP110 isoform 3/Sp110b; this interaction sequesters the transcriptional corepressor SP110 away from the nucleus. Interacts with host CREB3 nuclear transcription protein; this interaction triggers cell transformation. Interacts with host ACY3. Interacts with host C1QR1. Interacts with host RBM24; this interaction, which enhances the interaction of the mature core protein with 5'-UTR, may inhibit viral translation and favor replication. Interacts with host EIF2AK2/PKR; this interaction induces the autophosphorylation of EIF2AK2. Part of the viral assembly initiation complex composed of NS2, E1, E2, NS3, NS4A, NS5A and the mature core protein. Forms a heterodimer with envelope glycoprotein E2. Interacts with mature core protein. Interacts with protease NS2. The heterodimer E1/E2 interacts with host CLDN1; this interaction plays a role in viral entry into host cell. Interacts with host SPSB2 (via C-terminus). Part of the viral assembly initiation complex composed of NS2, E1, E2, NS3, NS4A, NS5A and the mature core protein. Interacts with host NEURL3; this interaction prevents E1 binding to glycoprotein E2. As to quaternary structure, forms a heterodimer with envelope glycoprotein E1. Interacts with host CD81 and SCARB1 receptors; these interactions play a role in viral entry into host cell. Interacts with host EIF2AK2/PKR; this interaction inhibits EIF2AK2 and probably allows the virus to evade the innate immune response. Interacts with host CD209/DC-SIGN and CLEC4M/DC-SIGNR. Interact with host SPCS1; this interaction is essential for viral particle assembly. Interacts with protease NS2. The heterodimer E1/E2 interacts with host CLDN1; this interaction plays a role in viral entry into host cell. Part of the viral assembly initiation complex composed of NS2, E1, E2, NS3, NS4A, NS5A and the mature core protein. Interacts with host SLC3A2/4F2hc; the interaction may facilitate viral entry into host cell. Interacts with human PLSCR1. In terms of assembly, homohexamer. Homoheptamer. Interacts with protease NS2. Homodimer. Interacts with host SPCS1; this interaction is essential for viral particle assembly. Interacts with envelope glycoprotein E1. Interacts with envelope glycoprotein E2. Interacts with viroporin p7. Interacts with serine protease/helicase NS3. Part of the replication complex composed of NS2, NS3, NS4A, NS4B, NS5A and the RNA-directed RNA polymerase embedded in an ER-derived membranous web. Part of the viral assembly initiation complex composed of NS2, E1, E2, NS3, NS4A, NS5A and the mature core protein. As to quaternary structure, interacts with protease NS2. Interacts with non-structural protein 4A; this interaction stabilizes the folding of NS3 serine protease. NS3-NS4A interaction is essential for NS3 activation and allows membrane anchorage of the latter. NS3/NS4A complex also prevents phosphorylation of host IRF3, thus preventing the establishment of dsRNA induced antiviral state. Interacts with host MAVS; this interaction leads to the cleavage and inhibition of host MAVS. Interacts with host TICAM1; this interaction leads to the cleavage and inhibition of host TICAM1. Interacts with host TANK-binding kinase/TBK1; this interaction results in the inhibition of the association between TBK1 and IRF3, which leads to the inhibition of IRF3 activation. Interacts with host RBM24. Part of the replication complex composed of NS2, NS3, NS4A, NS4B, NS5A and the RNA-directed RNA polymerase embedded in an ER-derived membranous web. Part of the viral assembly initiation complex composed of NS2, E1, E2, NS3, NS4A, NS5A and the mature core protein. In terms of assembly, interacts with NS3 serine protease; this interaction stabilizes the folding of NS3 serine protease. NS3-NS4A interaction is essential for NS3 activation and allows membrane anchorage of the latter. Interacts with non-structural protein 5A (via N-terminus). Part of the replication complex composed of NS2, NS3, NS4A, NS4B, NS5A and the RNA-directed RNA polymerase embedded in an ER-derived membranous web. Part of the viral assembly initiation complex composed of NS2, E1, E2, NS3, NS4A, NS5A and the mature core protein. Homomultimer. Interacts with non-structural protein NS5A. Interacts with host PLA2G4C; this interaction likely initiates the recruitment of replication complexes to lipid droplets. Interacts with host STING; this interaction disrupts the interaction between STING and TBK1 thereby suppressing the interferon signaling. Part of the replication complex composed of NS2, NS3, NS4A, NS4B, NS5A and the RNA-directed RNA polymerase embedded in an ER-derived membranous web. As to quaternary structure, monomer. Homodimer; dimerization is required for RNA-binding. Interacts with the mature core protein. Interacts (via N-terminus) with non-structural protein 4A. Interacts with non-structural protein 4B. Interacts (via region D2) with RNA-directed RNA polymerase. Part of the viral assembly initiation complex composed of NS2, E1, E2, NS3, NS4A, NS5A and the mature core protein. Part of the replication complex composed of NS2, NS3, NS4A, NS4B, NS5A and the RNA-directed RNA polymerase embedded in an ER-derived membranous web. Interacts with host GRB2. Interacts with host BIN1. Interacts with host PIK3R1. Interacts with host SRCAP. Interacts with host FKBP8. Interacts (via C-terminus) with host VAPB (via MSP domain). Interacts with host EIF2AK2/PKR; this interaction leads to disruption of EIF2AK2 dimerization by NS5A and probably allows the virus to evade the innate immune response. Interacts (via N-terminus) with host PACSIN2 (via N-terminus); this interaction attenuates protein kinase C alpha-mediated phosphorylation of PACSIN2 by disrupting the interaction between PACSIN2 and PRKCA. Interacts (via N-terminus) with host SRC kinase (via SH2 domain). Interacts with most Src-family kinases. Interacts with host IFI27 and SKP2; promotes the ubiquitin-mediated proteasomal degradation of NS5A. Interacts with host GPS2. Interacts with host TNFRSF21; this interaction allows the modulation by the virus of JNK, p38 MAPK, STAT3, and Akt signaling pathways in a DR6-dependent manner. Interacts (via N-terminus) with host CIDEB (via N-terminus); this interaction seems to regulate the association of HCV particles with APOE. Interacts with host CHKA/Choline Kinase-alpha; CHKA bridges host PI4KA and NS5A and potentiates NS5A-stimulated PI4KA activity, which then facilitates the targeting of the ternary complex to the ER for viral replication. Interacts with host SPSB2 (via C-terminus); this interaction targets NS5A for ubiquitination and degradation. Interacts with host RAB18; this interaction may promote the association of NS5A and other replicase components with lipid droplets. Interacts (via region D2) with host PPIA/CYPA; the interaction stimulates RNA-binding ability of NS5A and is dependent on the peptidyl-prolyl cis-trans isomerase activity of PPIA/CYPA. Interacts with host TRIM14; this interaction induces the degradation of NS5A. In terms of assembly, homooligomer. Interacts with non-structural protein 5A. Interacts with host VAPB. Interacts with host PRK2/PKN2. Interacts with host HNRNPA1 and SEPT6; these interactions facilitate viral replication. Part of the replication complex composed of NS2, NS3, NS4A, NS4B, NS5A and the RNA-directed RNA polymerase. It depends on Zn(2+) as a cofactor. Requires Mg(2+) as cofactor. Post-translationally, specific enzymatic cleavages in vivo yield mature proteins. The structural proteins, core, E1, E2 and p7 are produced by proteolytic processing by host signal peptidases. The core protein precursor is synthesized as a 23 kDa, which is retained in the ER membrane through the hydrophobic signal peptide. Cleavage by the signal peptidase releases the 21 kDa mature core protein. The cleavage of the core protein precursor occurs between aminoacids 176 and 188 but the exact cleavage site is not known. Some degraded forms of the core protein appear as well during the course of infection. The other proteins (p7, NS2, NS3, NS4A, NS4B, NS5A and NS5B) are cleaved by the viral proteases. Autoprocessing between NS2 and NS3 is mediated by the NS2 cysteine protease catalytic domain and regulated by the NS3 N-terminal domain. Phosphorylated by host PKC and PKA. In terms of processing, ubiquitinated; mediated by UBE3A and leading to core protein subsequent proteasomal degradation. Post-translationally, highly N-glycosylated. Palmitoylation is required for NS2/3 autoprocessing and E2 recruitment to membranes. In terms of processing, palmitoylated. This modification may play a role in its polymerization or in protein-protein interactions. Post-translationally, phosphorylated on serines in a basal form termed p56. p58 is a hyperphosphorylated form of p56. p56 and p58 coexist in the cell in roughly equivalent amounts. Hyperphosphorylation is dependent on the presence of NS4A. Host CSNK1A1/CKI-alpha or RPS6KB1 kinases may be responsible for NS5A phosphorylation. Tyrosine phosphorylation is essential for the interaction with host SRC. In terms of processing, the N-terminus is phosphorylated by host PRK2/PKN2.

The protein resides in the host endoplasmic reticulum membrane. It is found in the host mitochondrion membrane. It localises to the virion. Its subcellular location is the host cytoplasm. The protein localises to the host nucleus. The protein resides in the host lipid droplet. It is found in the virion membrane. It localises to the host mitochondrion. Its subcellular location is the host cell membrane. The protein localises to the host perinuclear region. The enzyme catalyses Hydrolysis of four peptide bonds in the viral precursor polyprotein, commonly with Asp or Glu in the P6 position, Cys or Thr in P1 and Ser or Ala in P1'.. The catalysed reaction is a ribonucleoside 5'-triphosphate + H2O = a ribonucleoside 5'-diphosphate + phosphate + H(+). It catalyses the reaction ATP + H2O = ADP + phosphate + H(+). It carries out the reaction RNA(n) + a ribonucleoside 5'-triphosphate = RNA(n+1) + diphosphate. With respect to regulation, inhibited by the antiviral drug hexamethylene amiloride. Inhibition by amantadine appears to be genotype-dependent. Also inhibited by long-alkyl-chain iminosugar derivatives. Its activity is regulated as follows. Activity is up-regulated by PRK2/PKN2-mediated phosphorylation. In terms of biological role, packages viral RNA to form a viral nucleocapsid, and promotes virion budding. Participates in the viral particle production as a result of its interaction with the non-structural protein 5A. Binds RNA and may function as a RNA chaperone to induce the RNA structural rearrangements taking place during virus replication. Modulates viral translation initiation by interacting with viral IRES and 40S ribosomal subunit. Affects various cell signaling pathways, host immunity and lipid metabolism. Prevents the establishment of cellular antiviral state by blocking the interferon-alpha/beta (IFN-alpha/beta) and IFN-gamma signaling pathways and by blocking the formation of phosphorylated STAT1 and promoting ubiquitin-mediated proteasome-dependent degradation of STAT1. Activates STAT3 leading to cellular transformation. Regulates the activity of cellular genes, including c-myc and c-fos. May repress the promoter of p53, and sequester CREB3 and SP110 isoform 3/Sp110b in the cytoplasm. Represses cell cycle negative regulating factor CDKN1A, thereby interrupting an important check point of normal cell cycle regulation. Targets transcription factors involved in the regulation of inflammatory responses and in the immune response: suppresses TNF-induced NF-kappa-B activation, and activates AP-1. Binds to dendritic cells (DCs) via C1QR1, resulting in down-regulation of T-lymphocytes proliferation. Alters lipid metabolism by interacting with hepatocellular proteins involved in lipid accumulation and storage. Induces up-regulation of FAS promoter activity, and thereby contributes to the increased triglyceride accumulation in hepatocytes (steatosis). Functionally, forms a heterodimer with envelope glycoprotein E2, which mediates virus attachment to the host cell, virion internalization through clathrin-dependent endocytosis and fusion with host membrane. Fusion with the host cell is most likely mediated by both E1 and E2, through conformational rearrangements of the heterodimer required for fusion rather than a classical class II fusion mechanism. E1/E2 heterodimer binds host apolipoproteins such as APOB and ApoE thereby forming a lipo-viro-particle (LVP). APOE associated to the LVP allows the initial virus attachment to cell surface receptors such as the heparan sulfate proteoglycans (HSPGs), syndecan-1 (SDC1), syndecan-1 (SDC2), the low-density lipoprotein receptor (LDLR) and scavenger receptor class B type I (SCARB1). The cholesterol transfer activity of SCARB1 allows E2 exposure and binding of E2 to SCARB1 and the tetraspanin CD81. E1/E2 heterodimer binding on CD81 activates the epithelial growth factor receptor (EGFR) signaling pathway. Diffusion of the complex E1-E2-EGFR-SCARB1-CD81 to the cell lateral membrane allows further interaction with Claudin 1 (CLDN1) and occludin (OCLN) to finally trigger HCV entry. Its function is as follows. Forms a heterodimer with envelope glycoprotein E1, which mediates virus attachment to the host cell, virion internalization through clathrin-dependent endocytosis and fusion with host membrane. Fusion with the host cell is most likely mediated by both E1 and E2, through conformational rearrangements of the heterodimer required for fusion rather than a classical class II fusion mechanism. The interaction between envelope glycoprotein E2 and host apolipoprotein E/APOE allows the proper assembly, maturation and infectivity of the viral particles. This interaction is probably promoted via the up-regulation of cellular autophagy by the virus. E1/E2 heterodimer binds host apolipoproteins such as APOB and APOE thereby forming a lipo-viro-particle (LVP). APOE associated to the LVP allows the initial virus attachment to cell surface receptors such as the heparan sulfate proteoglycans (HSPGs), syndecan-1 (SDC1), syndecan-1 (SDC2), the low-density lipoprotein receptor (LDLR) and scavenger receptor class B type I (SCARB1). The cholesterol transfer activity of SCARB1 allows E2 exposure and binding of E2 to SCARB1 and the tetraspanin CD81. E1/E2 heterodimer binding on CD81 activates the epithelial growth factor receptor (EGFR) signaling pathway. Diffusion of the complex E1-E2-EGFR-SCARB1-CD81 to the cell lateral membrane allows further interaction with Claudin 1 (CLDN1) and occludin (OCLN) to finally trigger HCV entry. Inhibits host EIF2AK2/PKR activation, preventing the establishment of an antiviral state. Viral ligand for CD209/DC-SIGN and CLEC4M/DC-SIGNR, which are respectively found on dendritic cells (DCs), and on liver sinusoidal endothelial cells and macrophage-like cells of lymph node sinuses. These interactions allow the capture of circulating HCV particles by these cells and subsequent facilitated transmission to permissive cells such as hepatocytes and lymphocyte subpopulations. The interaction between E2 and host amino acid transporter complex formed by SLC3A2 and SLC7A5/LAT1 may facilitate viral entry into host cell. Ion channel protein that acts as a viroporin and plays an essential role in the assembly, envelopment and secretion of viral particles. Regulates the host cell secretory pathway, which induces the intracellular retention of viral glycoproteins and favors assembly of viral particles. Creates a pore in acidic organelles and releases Ca(2+) and H(+) in the cytoplasm of infected cells, leading to a productive viral infection. High levels of cytoplasmic Ca(2+) may trigger membrane trafficking and transport of viral ER-associated proteins to viroplasms, sites of viral genome replication. This ionic imbalance induces the assembly of the inflammasome complex, which triggers the maturation of pro-IL-1beta into IL-1beta through the action of caspase-1. Targets also host mitochondria and induces mitochondrial depolarization. In addition of its role as a viroporin, acts as a lipid raft adhesion factor. In terms of biological role, cysteine protease required for the proteolytic auto-cleavage between the non-structural proteins NS2 and NS3. The N-terminus of NS3 is required for the function of NS2 protease (active region NS2-3). Promotes the initiation of viral particle assembly by mediating the interaction between structural and non-structural proteins. Functionally, displays three enzymatic activities: serine protease with a chymotrypsin-like fold, NTPase and RNA helicase. NS3 serine protease, in association with NS4A, is responsible for the cleavages of NS3-NS4A, NS4A-NS4B, NS4B-NS5A and NS5A-NS5B. The NS3/NS4A complex prevents phosphorylation of host IRF3, thus preventing the establishment of dsRNA induced antiviral state. The NS3/NS4A complex induces host amino acid transporter component SLC3A2, thus contributing to HCV propagation. NS3 RNA helicase binds to RNA and unwinds both dsDNA and dsRNA in the 3' to 5' direction, and likely resolves RNA complicated stable secondary structures in the template strand. Binds a single ATP and catalyzes the unzipping of a single base pair of dsRNA. Inhibits host antiviral proteins TBK1 and IRF3 thereby preventing the establishment of an antiviral state. Cleaves host MAVS/CARDIF thereby preventing the establishment of an antiviral state. Cleaves host TICAM1/TRIF, thereby disrupting TLR3 signaling and preventing the establishment of an antiviral state. Its function is as follows. Induces a specific membrane alteration that serves as a scaffold for the virus replication complex. This membrane alteration gives rise to the so-called ER-derived membranous web that contains the replication complex. NS4B self-interaction contributes to its function in membranous web formation. Promotes host TRIF protein degradation in a CASP8-dependent manner thereby inhibiting host TLR3-mediated interferon signaling. Disrupts the interaction between STING and TBK1 contributing to the inhibition of interferon signaling. Phosphorylated protein that is indispensable for viral replication and assembly. Both hypo- and hyperphosphorylated states are required for the viral life cycle. The hyperphosphorylated form of NS5A is an inhibitor of viral replication. Involved in RNA-binding and especially in binding to the viral genome. Zinc is essential for RNA-binding. Participates in the viral particle production as a result of its interaction with the mature viral core protein. Its interaction with host VAPB may target the viral replication complex to vesicles. Down-regulates viral IRES translation initiation. Mediates interferon resistance, presumably by interacting with and inhibiting host EIF2AK2/PKR. Prevents BIN1-induced apoptosis. Acts as a transcriptional activator of some host genes important for viral replication when localized in the nucleus. Via the interaction with host PACSIN2, modulates lipid droplet formation in order to promote virion assembly. Modulates TNFRSF21/DR6 signaling pathway for viral propagation. In terms of biological role, RNA-dependent RNA polymerase that performs primer-template recognition and RNA synthesis during viral replication. Initiates RNA transcription/replication at a flavin adenine dinucleotide (FAD), resulting in a 5'- FAD cap on viral RNAs. In this way, recognition of viral 5' RNA by host pattern recognition receptors can be bypassed, thereby evading activation of antiviral pathways. This chain is Genome polyprotein, found in Hepatitis C virus genotype 5a (isolate EUH1480) (HCV).